We begin with the raw amino-acid sequence, 250 residues long: Probable aquaporin TIP1-1 (250 aa).

The next 2 membrane-spanning stretches (helical) occupy residues 25 to 44 (AEFI…GMAF) and 58 to 77 (LIAA…SVGA). The NPA 1 signature appears at 85-87 (NPA). The next 3 membrane-spanning stretches (helical) occupy residues 103–121 (GLLY…CFLL), 144–163 (LVLE…ATAV), and 170–192 (LGTI…GGAF). The short motif at 198–200 (NPA) is the NPA 2 element. A helical membrane pass occupies residues 216–233 (WVYWVGPLIGGGLAGVIY).

The protein belongs to the MIP/aquaporin (TC 1.A.8) family. TIP (TC 1.A.8.10) subfamily. Expressed in roots and leaves.

It localises to the vacuole membrane. Functionally, aquaporins facilitate the transport of water and small neutral solutes across cell membranes. May be involved in transport from the vacuolar compartment to the cytoplasm. This chain is Probable aquaporin TIP1-1 (TIP1-1), found in Oryza sativa subsp. japonica (Rice).